We begin with the raw amino-acid sequence, 71 residues long: V-type proton ATPase subunit e (71 aa).

Residues 1–2 (MS) are Lumenal-facing. The helical transmembrane segment at 3 to 23 (FFHVVFVAFVIAAIGAAGWFV) threads the bilayer. Residues 24 to 35 (TPKGKNQTLLRT) lie on the Cytoplasmic side of the membrane. The chain crosses the membrane as a helical span at residues 36–56 (SLLLTLTCCYLMWAITYLCQL). Residues 57–71 (HPLITPRRSDLRMEY) lie on the Lumenal side of the membrane.

The protein belongs to the V-ATPase e1/e2 subunit family. V-ATPase is a heteromultimeric enzyme composed of a peripheral catalytic V1 complex (components A to H) attached to an integral membrane V0 proton pore complex (components: a, c, c', c'', d, e, f and VOA1).

It is found in the vacuole membrane. In terms of biological role, subunit of the V0 complex of vacuolar(H+)-ATPase (V-ATPase), a multisubunit enzyme composed of a peripheral complex (V1) that hydrolyzes ATP and a membrane integral complex (V0) that translocates protons. V-ATPase is responsible for acidifying and maintaining the pH of intracellular compartments. The protein is V-type proton ATPase subunit e (VMA9) of Cryptococcus neoformans var. neoformans serotype D (strain JEC21 / ATCC MYA-565) (Filobasidiella neoformans).